Here is a 119-residue protein sequence, read N- to C-terminus: Thioredoxin H4 (119 aa).

A Thioredoxin domain is found at 2-115 (AAEEGQVIGC…LQAKIVKHTG (114 aa)). Residues Cys40 and Cys43 each act as nucleophile in the active site. Cys40 and Cys43 form a disulfide bridge.

The protein belongs to the thioredoxin family. Plant H-type subfamily. Interacts with MDH1.

The protein resides in the cytoplasm. In terms of biological role, thiol-disulfide oxidoreductase probably involved in the redox regulation of a number of cytosolic enzymes. Possesses insulin disulfide bonds reducing activity. The polypeptide is Thioredoxin H4 (TRX4) (Arabidopsis thaliana (Mouse-ear cress)).